The primary structure comprises 267 residues: 4-hydroxy-tetrahydrodipicolinate reductase (267 aa).

NAD(+) is bound at residue 10-15 (GANGRM). Arginine 37 is a binding site for NADP(+). NAD(+) contacts are provided by residues 98–100 (GTT) and 122–125 (ARNY). Catalysis depends on histidine 155, which acts as the Proton donor/acceptor. Histidine 156 serves as a coordination point for (S)-2,3,4,5-tetrahydrodipicolinate. The active-site Proton donor is lysine 159. 165–166 (GT) contributes to the (S)-2,3,4,5-tetrahydrodipicolinate binding site.

Belongs to the DapB family.

Its subcellular location is the cytoplasm. The enzyme catalyses (S)-2,3,4,5-tetrahydrodipicolinate + NAD(+) + H2O = (2S,4S)-4-hydroxy-2,3,4,5-tetrahydrodipicolinate + NADH + H(+). It carries out the reaction (S)-2,3,4,5-tetrahydrodipicolinate + NADP(+) + H2O = (2S,4S)-4-hydroxy-2,3,4,5-tetrahydrodipicolinate + NADPH + H(+). It participates in amino-acid biosynthesis; L-lysine biosynthesis via DAP pathway; (S)-tetrahydrodipicolinate from L-aspartate: step 4/4. Functionally, catalyzes the conversion of 4-hydroxy-tetrahydrodipicolinate (HTPA) to tetrahydrodipicolinate. This is 4-hydroxy-tetrahydrodipicolinate reductase from Pseudoalteromonas translucida (strain TAC 125).